The chain runs to 214 residues: Attacin (214 aa).

An N-terminal signal peptide occupies residues 1-19 (MSKSVALLLLCACLASGRH). Positions 20–26 (VPTRARR) are excised as a propeptide.

It belongs to the attacin/sarcotoxin-2 family. Highest expression in fat body and hemocytes and to a much lesser extent in Malpighian tubules, silk gland and midgut.

Its subcellular location is the secreted. Hemolymph antibacterial protein. Has a wide spectrum of activity against both Gram-positive and Gram-negative bacteria. The chain is Attacin from Bombyx mori (Silk moth).